An 81-amino-acid polypeptide reads, in one-letter code: MSHSVKIYDTCIGCTQCVRACPLDVLEMVPWDGCKAAQIASSPRTEDCIGCKRCETACPTDFLSIRVYLGAETTRSMGLAY.

4Fe-4S ferredoxin-type domains follow at residues 1-31 (MSHSVKIYDTCIGCTQCVRACPLDVLEMVPW) and 39-68 (IASSPRTEDCIGCKRCETACPTDFLSIRVY). Cys11, Cys14, Cys17, Cys21, Cys48, Cys51, Cys54, and Cys58 together coordinate [4Fe-4S] cluster.

In terms of assembly, the cyanobacterial PSI reaction center is composed of one copy each of PsaA,B,C,D,E,F,I,J,K,L,M and X, and forms trimeric complexes. [4Fe-4S] cluster serves as cofactor.

Its subcellular location is the cellular thylakoid membrane. The enzyme catalyses reduced [plastocyanin] + hnu + oxidized [2Fe-2S]-[ferredoxin] = oxidized [plastocyanin] + reduced [2Fe-2S]-[ferredoxin]. Apoprotein for the two 4Fe-4S centers FA and FB of photosystem I (PSI); essential for photochemical activity. FB is the terminal electron acceptor of PSI, donating electrons to ferredoxin. The C-terminus interacts with PsaA/B/D and helps assemble the protein into the PSI complex. Required for binding of PsaD and PsaE to PSI. PSI is a plastocyanin/cytochrome c6-ferredoxin oxidoreductase, converting photonic excitation into a charge separation, which transfers an electron from the donor P700 chlorophyll pair to the spectroscopically characterized acceptors A0, A1, FX, FA and FB in turn. The protein is Photosystem I iron-sulfur center of Microcystis aeruginosa (strain NIES-843 / IAM M-2473).